The sequence spans 309 residues: Protein FdhE homolog (309 aa).

Belongs to the FdhE family.

It is found in the cytoplasm. Functionally, necessary for formate dehydrogenase activity. This chain is Protein FdhE homolog, found in Cronobacter sakazakii (strain ATCC BAA-894) (Enterobacter sakazakii).